The chain runs to 164 residues: UPF0225 protein Shewana3_2159 (164 aa).

This sequence belongs to the UPF0225 family.

The chain is UPF0225 protein Shewana3_2159 from Shewanella sp. (strain ANA-3).